Consider the following 1070-residue polypeptide: Ubiquitin-protein ligase E3B (1070 aa).

An N-acetylmethionine modification is found at Met1. The IQ domain occupies 29–58 (RERSAVTIQALVRSFLCRRRLHRDIRKEID). Ser421 carries the post-translational modification Phosphoserine. Residues 704 to 1070 (SQHAMKGVIR…ISMNTGFELS (367 aa)) enclose the HECT domain. Cys1038 serves as the catalytic Glycyl thioester intermediate.

Widely expressed. High expression is observed in developing central nervous system.

It localises to the postsynaptic density. The catalysed reaction is S-ubiquitinyl-[E2 ubiquitin-conjugating enzyme]-L-cysteine + [acceptor protein]-L-lysine = [E2 ubiquitin-conjugating enzyme]-L-cysteine + N(6)-ubiquitinyl-[acceptor protein]-L-lysine.. The protein operates within protein modification; protein ubiquitination. Its function is as follows. E3 ubiquitin-protein ligase which accepts ubiquitin from an E2 ubiquitin-conjugating enzyme in the form of a thioester and then directly transfers the ubiquitin to targeted substrates. Ubiquitinates BCKDK and targets it for degradation, thereby regulating various metabolic processes. Involved in the positive regulation of neurite branching in hippocampal neurons and the control of neuronal spine number and morphology, through the ubiquitination of PPP3CC. The protein is Ubiquitin-protein ligase E3B (Ube3b) of Mus musculus (Mouse).